Consider the following 241-residue polypeptide: Phosphoribosylaminoimidazole-succinocarboxamide synthase (241 aa).

The protein belongs to the SAICAR synthetase family.

It carries out the reaction 5-amino-1-(5-phospho-D-ribosyl)imidazole-4-carboxylate + L-aspartate + ATP = (2S)-2-[5-amino-1-(5-phospho-beta-D-ribosyl)imidazole-4-carboxamido]succinate + ADP + phosphate + 2 H(+). It functions in the pathway purine metabolism; IMP biosynthesis via de novo pathway; 5-amino-1-(5-phospho-D-ribosyl)imidazole-4-carboxamide from 5-amino-1-(5-phospho-D-ribosyl)imidazole-4-carboxylate: step 1/2. The protein is Phosphoribosylaminoimidazole-succinocarboxamide synthase of Oenococcus oeni (strain ATCC BAA-331 / PSU-1).